The primary structure comprises 110 residues: Glutaredoxin-1 (110 aa).

In terms of domain architecture, Glutaredoxin spans 7 to 110 (IKHVKDLIAE…EELLEPILAN (104 aa)). A Glycyl lysine isopeptide (Lys-Gly) (interchain with G-Cter in ubiquitin) cross-link involves residue Lys11. Glutathione is bound by residues 24–29 (KTYCPY), Gln63, Val75, and 88–89 (ND). Position 27 is an S-glutathionyl cysteine; alternate (Cys27). Cys27 and Cys30 are joined by a disulfide.

The protein belongs to the glutaredoxin family.

The protein localises to the cytoplasm. The protein resides in the nucleus. The catalysed reaction is 2 glutathione + H2O2 = glutathione disulfide + 2 H2O. It carries out the reaction 1-chloro-2,4-dinitrobenzene + glutathione = 2,4-dinitrophenyl-S-glutathione + chloride + H(+). It catalyses the reaction RX + glutathione = an S-substituted glutathione + a halide anion + H(+). Functionally, component of the glutathione system which performs several activities such as glutathione-dependent oxidoreductase, glutathione peroxidase and glutathione S-transferase (GST) activity. The disulfide bond functions as an electron carrier in the glutathione-dependent synthesis of deoxyribonucleotides by the enzyme ribonucleotide reductase. In addition, it is also involved in reducing cytosolic protein- and non-protein-disulfides in a coupled system with glutathione reductase. Required for resistance to reactive oxygen species (ROS) by directly reducing hydroperoxides and for the detoxification of ROS-mediated damage. GRX1 is less active as an oxidoreductase than GRX2. The protein is Glutaredoxin-1 (GRX1) of Saccharomyces cerevisiae (strain ATCC 204508 / S288c) (Baker's yeast).